Reading from the N-terminus, the 424-residue chain is CinA-like protein (424 aa).

It belongs to the CinA family.

The protein is CinA-like protein of Prochlorococcus marinus (strain MIT 9312).